Reading from the N-terminus, the 84-residue chain is Small ribosomal subunit protein uS17c (84 aa).

This sequence belongs to the universal ribosomal protein uS17 family. Part of the 30S ribosomal subunit.

It localises to the plastid. The protein localises to the chloroplast. In terms of biological role, one of the primary rRNA binding proteins, it binds specifically to the 5'-end of 16S ribosomal RNA. This Trieres chinensis (Marine centric diatom) protein is Small ribosomal subunit protein uS17c (rps17).